A 296-amino-acid chain; its full sequence is Cytidine deaminase (296 aa).

2 CMP/dCMP-type deaminase domains span residues 47 to 167 and 186 to 296; these read ELNE…FGPS and DSND…VEPE. A substrate-binding site is contributed by 88–90; sequence NIE. Residue H101 coordinates Zn(2+). The active-site Proton donor is the E103. Zn(2+) contacts are provided by C128 and C131.

It belongs to the cytidine and deoxycytidylate deaminase family. Homodimer. It depends on Zn(2+) as a cofactor.

It catalyses the reaction cytidine + H2O + H(+) = uridine + NH4(+). The catalysed reaction is 2'-deoxycytidine + H2O + H(+) = 2'-deoxyuridine + NH4(+). Its function is as follows. This enzyme scavenges exogenous and endogenous cytidine and 2'-deoxycytidine for UMP synthesis. The chain is Cytidine deaminase from Shewanella halifaxensis (strain HAW-EB4).